We begin with the raw amino-acid sequence, 448 residues long: Probable glucuronoxylan glucuronosyltransferase IRX7 (448 aa).

Residues 1-16 (MTTHKHRRTEKNLCFK) are Cytoplasmic-facing. Residues 17–37 (QYYKWILCFILTLYFFASFFV) form a helical; Signal-anchor for type II membrane protein membrane-spanning segment. Over 38–448 (DHDQDHRSST…RSVRRSNSFL (411 aa)) the chain is Lumenal. Asparagine 157, asparagine 189, asparagine 287, asparagine 397, and asparagine 438 each carry an N-linked (GlcNAc...) asparagine glycan.

It belongs to the glycosyltransferase 47 family. As to expression, expressed in developing interfascicular fibers and xylem cells in stems and developing secondary xylem in roots.

The protein resides in the golgi apparatus membrane. Involved in the synthesis of the hemicellulose glucuronoxylan, a major component of secondary cell walls. Probably involved in the synthesis of the glycosyl sequence at the glucuronoxylan reducing end. The protein is Probable glucuronoxylan glucuronosyltransferase IRX7 (IRX7) of Arabidopsis thaliana (Mouse-ear cress).